A 171-amino-acid polypeptide reads, in one-letter code: S-ribosylhomocysteine lyase (171 aa).

Positions 54, 58, and 128 each coordinate Fe cation.

Belongs to the LuxS family. As to quaternary structure, homodimer. Fe cation is required as a cofactor.

It carries out the reaction S-(5-deoxy-D-ribos-5-yl)-L-homocysteine = (S)-4,5-dihydroxypentane-2,3-dione + L-homocysteine. In terms of biological role, involved in the synthesis of autoinducer 2 (AI-2) which is secreted by bacteria and is used to communicate both the cell density and the metabolic potential of the environment. The regulation of gene expression in response to changes in cell density is called quorum sensing. Catalyzes the transformation of S-ribosylhomocysteine (RHC) to homocysteine (HC) and 4,5-dihydroxy-2,3-pentadione (DPD). The chain is S-ribosylhomocysteine lyase from Klebsiella pneumoniae (strain 342).